Consider the following 418-residue polypeptide: UDP-N-acetylglucosamine 1-carboxyvinyltransferase (418 aa).

22–23 (KN) contacts phosphoenolpyruvate. Residue Arg-91 coordinates UDP-N-acetyl-alpha-D-glucosamine. The Proton donor role is filled by Cys-115. Cys-115 carries the post-translational modification 2-(S-cysteinyl)pyruvic acid O-phosphothioketal. Residues 120-124 (RPVDL), 160-163 (KVSV), Asp-305, and Ile-327 contribute to the UDP-N-acetyl-alpha-D-glucosamine site.

This sequence belongs to the EPSP synthase family. MurA subfamily.

Its subcellular location is the cytoplasm. The enzyme catalyses phosphoenolpyruvate + UDP-N-acetyl-alpha-D-glucosamine = UDP-N-acetyl-3-O-(1-carboxyvinyl)-alpha-D-glucosamine + phosphate. Its pathway is cell wall biogenesis; peptidoglycan biosynthesis. Cell wall formation. Adds enolpyruvyl to UDP-N-acetylglucosamine. The protein is UDP-N-acetylglucosamine 1-carboxyvinyltransferase of Baumannia cicadellinicola subsp. Homalodisca coagulata.